The primary structure comprises 168 residues: Photosystem I assembly protein Ycf3 (168 aa).

TPR repeat units lie at residues 35–68, 72–105, and 120–153; these read AFTY…EIDP, SYIL…NPFL, and GEQA…TPGN.

This sequence belongs to the Ycf3 family.

It is found in the plastid. The protein resides in the chloroplast thylakoid membrane. Functionally, essential for the assembly of the photosystem I (PSI) complex. May act as a chaperone-like factor to guide the assembly of the PSI subunits. In Acorus calamus var. americanus (American sweet flag), this protein is Photosystem I assembly protein Ycf3.